The primary structure comprises 434 residues: Tol-Pal system protein TolB (434 aa).

An N-terminal signal peptide occupies residues 1-21; the sequence is MIVRRALALAALALAASPALA. The tract at residues 411 to 434 is disordered; sequence GDRQTPVTSGKTDLAAPAWGPLAP.

It belongs to the TolB family. In terms of assembly, the Tol-Pal system is composed of five core proteins: the inner membrane proteins TolA, TolQ and TolR, the periplasmic protein TolB and the outer membrane protein Pal. They form a network linking the inner and outer membranes and the peptidoglycan layer.

Its subcellular location is the periplasm. Functionally, part of the Tol-Pal system, which plays a role in outer membrane invagination during cell division and is important for maintaining outer membrane integrity. In Anaeromyxobacter sp. (strain K), this protein is Tol-Pal system protein TolB.